We begin with the raw amino-acid sequence, 484 residues long: uncharacterized protein (484 aa).

Residues 1–14 show a composition bias toward low complexity; that stretch reads MIDSTSTATATSKT. Residues 1 to 32 are disordered; sequence MIDSTSTATATSKTVELNTNGSKTDASSENGT. Residues 15 to 32 show a composition bias toward polar residues; it reads VELNTNGSKTDASSENGT. The residue at position 305 (Lys-305) is an N6-(pyridoxal phosphate)lysine.

This sequence belongs to the class-III pyridoxal-phosphate-dependent aminotransferase family. Pyridoxal 5'-phosphate is required as a cofactor.

This is an uncharacterized protein from Schizosaccharomyces pombe (strain 972 / ATCC 24843) (Fission yeast).